We begin with the raw amino-acid sequence, 868 residues long: B-cell receptor CD22 (868 aa).

The first 21 residues, 1-21, serve as a signal peptide directing secretion; the sequence is MRVHYLWLLLILGHVASARYS. Positions 22 to 148 constitute an Ig-like V-type domain; that stretch reads SANDWTVDHP…MEPIHLNVSE (127 aa). Over 22-708 the chain is Extracellular; that stretch reads SANDWTVDHP…YYSPETIGKR (687 aa). 3 disulfide bridges follow: Cys41–Cys177, Cys46–Cys112, and Cys171–Cys235. Asn111 and Asn122 each carry an N-linked (GlcNAc...) asparagine glycan. An N-acetylneuraminate-binding site is contributed by Arg130. Residues Asn145, Asn174, Asn271, Asn281, Asn384, Asn414, Asn466, Asn567, and Asn595 are each glycosylated (N-linked (GlcNAc...) asparagine). Ig-like C2-type domains follow at residues 153 to 250, 257 to 347, 352 to 435, 440 to 521, 526 to 603, and 614 to 697; these read PYIQ…RTVR, PKLE…VELT, PEPS…AKLD, PKAV…VILN, PRDV…ETLS, and PRRL…STLT. 4 disulfide bridges follow: Cys278–Cys330, Cys374–Cys417, Cys463–Cys505, and Cys550–Cys592. A disulfide bridge links Cys637 with Cys680. The chain crosses the membrane as a helical span at residues 709–727; sequence VALGLGFCLTICILAIWGM. The Cytoplasmic segment spans residues 728–868; it reads KIQKKWKQNR…EDVDYVTLKH (141 aa). Polar residues predominate over residues 738–752; that stretch reads SQQGLQENSSGQSFF. The segment at 738 to 772 is disordered; the sequence is SQQGLQENSSGQSFFVRNKKARRTPLSEGPQSQGC. Ser746, Ser747, and Ser750 each carry phosphoserine. Residues 781 to 786 carry the ITIM motif 1 motif; sequence VSYAIL. Tyr783 bears the Phosphotyrosine mark. The interval 790 to 812 is disordered; the sequence is ESDTHNTGDAGTPATQAPPPNNS. 3 positions are modified to phosphotyrosine: Tyr828, Tyr843, and Tyr863. Short sequence motifs (ITIM motif) lie at residues 841 to 846 and 861 to 866; these read IHYSEL and VDYVTL.

It belongs to the immunoglobulin superfamily. SIGLEC (sialic acid binding Ig-like lectin) family. As to quaternary structure, predominantly monomer of isoform CD22-beta. Also found as heterodimer of isoform CD22-beta and a shorter isoform. Interacts with PTPN6/SHP-1, LYN, SYK, PIK3R1/PIK3R2 and PLCG1 upon phosphorylation. Interacts with GRB2, INPP5D and SHC1 upon phosphorylation. May form a complex with INPP5D/SHIP, GRB2 and SHC1. Post-translationally, phosphorylated on tyrosine residues by LYN. Phosphorylation of Tyr-783 and Tyr-843 are involved in binding to SYK. Phosphorylation of Tyr-828 is involved in binding to GRB2. Phosphorylation of Tyr-863 is involved in binding to SYK, PLCG2 and PIK3R1/PIK3R2. B-lymphocytes.

It is found in the cell membrane. Most highly expressed siglec (sialic acid-binding immunoglobulin-like lectin) on B-cells that plays a role in various aspects of B-cell biology including differentiation, antigen presentation, and trafficking to bone marrow. Binds to alpha 2,6-linked sialic acid residues of surface molecules such as CD22 itself, CD45 and IgM in a cis configuration. Can also bind to ligands on other cells as an adhesion molecule in a trans configuration. Acts as an inhibitory coreceptor on the surface of B-cells and inhibits B-cell receptor induced signaling, characterized by inhibition of the calcium mobilization and cellular activation. Mechanistically, the immunoreceptor tyrosine-based inhibitory motif domain is phosphorylated by the Src kinase LYN, which in turn leads to the recruitment of the protein tyrosine phosphatase 1/PTPN6, leading to the negative regulation of BCR signaling. If this negative signaling from is of sufficient strength, apoptosis of the B-cell can be induced. The protein is B-cell receptor CD22 of Mus musculus (Mouse).